Reading from the N-terminus, the 219-residue chain is Elongation factor Ts (219 aa).

Residues 82 to 85 (TDFV) form an involved in Mg(2+) ion dislocation from EF-Tu region.

It belongs to the EF-Ts family.

The protein localises to the cytoplasm. Its function is as follows. Associates with the EF-Tu.GDP complex and induces the exchange of GDP to GTP. It remains bound to the aminoacyl-tRNA.EF-Tu.GTP complex up to the GTP hydrolysis stage on the ribosome. This is Elongation factor Ts from Gloeobacter violaceus (strain ATCC 29082 / PCC 7421).